A 232-amino-acid chain; its full sequence is MPDTTGGHPAALKVVTLDGPAGVGKTTLARRVADALGIPYLDTGAMFRTMAWRLGPDGPDLDEALLRDRLAGFVFTLRGRGGASVLSCNGEDIGNEIRTEEVGAMASRIAALPVVRECLKAAQQRMGAAQPLVVEGRDMGTVVFPGARHKFFLDAAPEIRAMRRYTQLQTMGEAHDLALLTEQIRSRDEQDRNRAVAPLRPAADAIIVDTGDLDIDGVFGVIMQHIRSRDGL.

19–27 lines the ATP pocket; sequence GPAGVGKTT.

This sequence belongs to the cytidylate kinase family. Type 1 subfamily.

It is found in the cytoplasm. The enzyme catalyses CMP + ATP = CDP + ADP. The catalysed reaction is dCMP + ATP = dCDP + ADP. The chain is Cytidylate kinase from Nitratidesulfovibrio vulgaris (strain ATCC 29579 / DSM 644 / CCUG 34227 / NCIMB 8303 / VKM B-1760 / Hildenborough) (Desulfovibrio vulgaris).